A 292-amino-acid chain; its full sequence is Ornithine decarboxylase antizyme (292 aa).

The protein belongs to the ODC antizyme family. Interacts with ODC/SPE1 and thereby sterically blocks ODC homodimerization.

Ornithine decarboxylase (ODC) antizyme protein that negatively regulates ODC activity and intracellular polyamine biosynthesis in response to increased intracellular polyamine levels. Binds to ODC/SPE1 monomers, inhibiting the assembly of the functional ODC homodimer, and targets the monomers for ubiquitin-independent proteolytic destruction by the 26S proteasome. The polypeptide is Ornithine decarboxylase antizyme (OAZ1) (Saccharomyces cerevisiae (strain ATCC 204508 / S288c) (Baker's yeast)).